Consider the following 362-residue polypeptide: Sulfate/thiosulfate import ATP-binding protein CysA (362 aa).

An ABC transporter domain is found at 3-237; that stretch reads IEINNISKYF…PASRFVMEFL (235 aa). Residue 35 to 42 participates in ATP binding; that stretch reads GPSGSGKT.

The protein belongs to the ABC transporter superfamily. Sulfate/tungstate importer (TC 3.A.1.6) family. As to quaternary structure, the complex is composed of two ATP-binding proteins (CysA), two transmembrane proteins (CysT and CysW) and a solute-binding protein (CysP).

It localises to the cell inner membrane. The catalysed reaction is sulfate(out) + ATP + H2O = sulfate(in) + ADP + phosphate + H(+). The enzyme catalyses thiosulfate(out) + ATP + H2O = thiosulfate(in) + ADP + phosphate + H(+). Functionally, part of the ABC transporter complex CysAWTP involved in sulfate/thiosulfate import. Responsible for energy coupling to the transport system. This is Sulfate/thiosulfate import ATP-binding protein CysA from Photorhabdus laumondii subsp. laumondii (strain DSM 15139 / CIP 105565 / TT01) (Photorhabdus luminescens subsp. laumondii).